The sequence spans 212 residues: uncharacterized protein (212 aa).

One can recognise an SIS domain in the interval 46-198; sequence LERVYREKRK…IYSLMTRLGI (153 aa).

Belongs to the SIS family. PHI subfamily.

This is an uncharacterized protein from Aeropyrum pernix (strain ATCC 700893 / DSM 11879 / JCM 9820 / NBRC 100138 / K1).